A 458-amino-acid polypeptide reads, in one-letter code: Argininosuccinate lyase (458 aa).

The protein belongs to the lyase 1 family. Argininosuccinate lyase subfamily.

Its subcellular location is the cytoplasm. The enzyme catalyses 2-(N(omega)-L-arginino)succinate = fumarate + L-arginine. It functions in the pathway amino-acid biosynthesis; L-arginine biosynthesis; L-arginine from L-ornithine and carbamoyl phosphate: step 3/3. The chain is Argininosuccinate lyase from Geotalea daltonii (strain DSM 22248 / JCM 15807 / FRC-32) (Geobacter daltonii).